Consider the following 351-residue polypeptide: Protein-glutamate methylesterase/protein-glutamine glutaminase 2 (351 aa).

In terms of domain architecture, Response regulatory spans 4–121 (KVLVVDDSTL…PQGFNEYQDL (118 aa)). Aspartate 55 carries the post-translational modification 4-aspartylphosphate. Residues 156-348 (RTVNTQLVAI…DKLLQYLASV (193 aa)) form the CheB-type methylesterase domain. Active-site residues include serine 168, histidine 194, and aspartate 290.

This sequence belongs to the CheB family. Post-translationally, phosphorylated by CheA. Phosphorylation of the N-terminal regulatory domain activates the methylesterase activity.

The protein localises to the cytoplasm. The catalysed reaction is [protein]-L-glutamate 5-O-methyl ester + H2O = L-glutamyl-[protein] + methanol + H(+). It carries out the reaction L-glutaminyl-[protein] + H2O = L-glutamyl-[protein] + NH4(+). In terms of biological role, involved in chemotaxis. Part of a chemotaxis signal transduction system that modulates chemotaxis in response to various stimuli. Catalyzes the demethylation of specific methylglutamate residues introduced into the chemoreceptors (methyl-accepting chemotaxis proteins or MCP) by CheR. Also mediates the irreversible deamidation of specific glutamine residues to glutamic acid. In Shewanella oneidensis (strain ATCC 700550 / JCM 31522 / CIP 106686 / LMG 19005 / NCIMB 14063 / MR-1), this protein is Protein-glutamate methylesterase/protein-glutamine glutaminase 2.